Consider the following 411-residue polypeptide: Putative metal tolerance protein C3 (411 aa).

Residues 1-115 are Cytoplasmic-facing; sequence MEVNYCPETP…DRAERAAQEL (115 aa). The helical transmembrane segment at 116–136 threads the bilayer; sequence AMQISNWANIFLLALKIYATV. The Vacuolar segment spans residues 137-140; it reads KSGS. A helical membrane pass occupies residues 141–161; that stretch reads IAIAASTLDSLLDLMAGGILW. Topologically, residues 162–184 are cytoplasmic; the sequence is FTHLSMKNVNIYKYPIGKLRVQP. The chain crosses the membrane as a helical span at residues 185-205; sequence VGIIIFAAVMATLGFQVLLVA. The Vacuolar segment spans residues 206–222; it reads AEQLISNEPSEKMNHVQ. Residues 223 to 243 traverse the membrane as a helical segment; the sequence is LIWLYSIMLSATAIKLVLWIY. Residues 244–262 are Cytoplasmic-facing; sequence CKSSRNHIVRAYAKDHHFD. A helical membrane pass occupies residues 263 to 283; sequence VVTNVLGLVAAVLANAFYWWL. Over 284 to 287 the chain is Vacuolar; it reads DPTG. A helical membrane pass occupies residues 288–308; the sequence is AILLAIYTIVNWSGTVMENAV. Residues 309–390 lie on the Cytoplasmic side of the membrane; that stretch reads SLIGQSAPPE…LPEVERAFVH (82 aa).

The protein belongs to the cation diffusion facilitator (CDF) transporter (TC 2.A.4) family.

It localises to the vacuole membrane. Functionally, involved in sequestration of excess metal in the cytoplasm into vacuoles to maintain metal homeostasis. The polypeptide is Putative metal tolerance protein C3 (MTPC3) (Arabidopsis thaliana (Mouse-ear cress)).